Consider the following 687-residue polypeptide: MDNQSLKTHYSVYELANLKLKTLPSAPKNIWEQAKRENWKSQKRQGRGGGLEYELASLPIEVQNELLLKTTPEQTAVALQKIEETRPLASNEVWQLWDEASAKAQEQAKIKLGTMFAVANLVESGVNVLDAFRLVCGKENAERLKNNEKLLSVGSLKNWWYRVKDAPRQDWLPLMLNNSGKSSKNVAEIDEAAWQFFKNFYYSREKPSLAHSYEVLKQAAQYNGWRIPSRSSLKRKMERDVPKTEEVFRREGQYALSRLYPSQVRTVAMLQAMEWINGDGYQHNVWVRFPDGEIKRPKTWLWQDVRTRKVLAARTDKSENTDTIRLSLLDVISRYGLPKHLTIDNTRAAANKKMTGGVKNRYRYQVNENEVQGIIPALGIELHWTSIQFGKGRGQAKPIERAFSHGGLGDYVDKHLLLRGAYAGANAYEKPDYDGKNGAEQPVDYATFLMALEQGIQQWNNVGNRLTEICAGKSSYAEAFERDWAVAEKRPISQSQMRLLLTLHEEVRLNQDGTFYLNAGKIGTNKNRYESLALIGTSHKRVVVRYDPANLHDKVWVYAXTGEYLAEAEITEKAGFGDQMAGREHNKAMRNWVKHTEKAAKERAKAEEMELSNYAPAVEFEERFLEMLPEPVKAPQTQAEEVEYEEVLDFNTVRKVPKAVEVEAEEISEFNRDWEKGLELLKKSKGR.

Residues 8-74 (THYSVYELAN…ELLLKTTPEQ (67 aa)) form the HTH Mu-type domain. The segment at residues 398–417 (PIERAFSHGGLGDYVDKHLL) is a DNA-binding region (H-T-H motif).

Its function is as follows. This transposase is essential for integration, replication-transposition, and excision of Mu-like viral DNA. This chain is Mu-like prophage FluMu transposase A, found in Haemophilus influenzae (strain ATCC 51907 / DSM 11121 / KW20 / Rd).